A 361-amino-acid polypeptide reads, in one-letter code: Phenylalanine--tRNA ligase alpha subunit (361 aa).

Glu260 lines the Mg(2+) pocket.

Belongs to the class-II aminoacyl-tRNA synthetase family. Phe-tRNA synthetase alpha subunit type 1 subfamily. In terms of assembly, tetramer of two alpha and two beta subunits. It depends on Mg(2+) as a cofactor.

It localises to the cytoplasm. It carries out the reaction tRNA(Phe) + L-phenylalanine + ATP = L-phenylalanyl-tRNA(Phe) + AMP + diphosphate + H(+). The polypeptide is Phenylalanine--tRNA ligase alpha subunit (Bartonella quintana (strain Toulouse) (Rochalimaea quintana)).